Reading from the N-terminus, the 2549-residue chain is Serine/threonine-protein kinase mTOR (2549 aa).

Met1 bears the N-acetylmethionine mark. Residues 1–651 form an interaction with NBN region; the sequence is MLGTGPAAAT…HVVSQTAVQV (651 aa). HEAT repeat units lie at residues 16-53, 55-99, 100-137, 138-179, 180-220, 222-276, 277-313, 314-364, 365-409, 410-445, 446-494, 495-529, 530-563, 564-596, 597-636, 637-683, 686-724, 727-766, 769-811, 814-853, 857-893, 894-942, 943-988, 989-1027, 1029-1068, 1069-1105, 1106-1144, 1145-1188, 1189-1225, 1226-1273, 1274-1311, and 1312-1345; these read SSNV…MELR, MSQE…VEGG, NATR…AMAG, DTFT…AISV, PTFF…LILT, QREP…RISS, MEGE…PRHI, TPFT…CCRD, LMEE…AFTD, TQYL…VAVR, SEFK…RAMG, PGIQ…RQIP, QLKK…GLAH, QLAS…EFEG, HSLT…SIHL, ISGH…DERF, HLAQ…MNPA, MPFL…NAPR, RPYM…VSGL, RKWV…STGY, PYRK…LLGA, LDPY…GNLP, LDEF…KCVQ, FLPQ…KSHI, PYMD…GEFK, LYLP…LFGA, NLDD…RLTE, SLDF…GKKY, QIFI…LADE, EEDP…GAAR, RVSK…QAYN, and PMAR…ELAL. Phosphoserine is present on Ser567. The residue at position 1162 (Thr1162) is a Phosphothreonine. Lys1218 bears the N6-acetyllysine mark. Ser1261 carries the phosphoserine modification. TPR repeat units follow at residues 1346–1382, 1383–1408, 1409–1442, 1443–1473, 1474–1507, 1508–1541, 1542–1574, 1575–1614, 1615–1649, 1650–1693, 1694–1731, 1732–1786, 1787–1846, 1898–1930, 1931–1970, and 1971–2005; these read TSQD…GIVL, LGER…QKGP, TPAI…HFGE, LEIQ…NKDD, PELM…VNDE, TQAK…RDTH, DGAF…LDAE, LTAM…RREI, IRQI…PHED, MRTW…PTVH, PQVT…AQHA, IATE…DRSW, YKAW…STEG, NNLQ…VKAI, QIDT…YHPQ, and ALIY…SNTL. The FAT domain maps to 1382–1982; that stretch reads LLGERAAKCR…IYPLTVASKS (601 aa). 1D-myo-inositol hexakisphosphate contacts are provided by Lys1662, Lys1702, and Arg1749. The segment at 1812–1867 is disordered; that stretch reads DEKKKLRHASGANITNATTAATTAATATTTASTEGSNSESEAESTENSPTPSPLQK. Positions 1820–1860 are enriched in low complexity; sequence ASGANITNATTAATTAATATTTASTEGSNSESEAESTENSP. The segment at 2012 to 2144 is sufficient for interaction with the FKBP1A/rapamycin complex; that stretch reads VSEELIRVAI…DLELAVPGTY (133 aa). A Glycyl lysine isopeptide (Lys-Gly) (interchain with G-Cter in ubiquitin) cross-link involves residue Lys2066. Residues 2156–2469 enclose the PI3K/PI4K catalytic domain; the sequence is IAPSLQVITS…GVELGEPAHK (314 aa). Phosphoserine; by TBK1 is present on Ser2159. A G-loop region spans residues 2162-2168; sequence VITSKQR. At Thr2164 the chain carries Phosphothreonine. Residues Ser2165 and Gln2167 each coordinate ATP. Position 2173 is a phosphothreonine; by PKB/AKT1 (Thr2173). Residues Leu2185, Lys2187, Glu2190, Tyr2225, Gly2238, Trp2239, Val2240, and Thr2245 each coordinate ATP. Residues 2258–2296 are interaction with MLST8; the sequence is KILLNIEHRIMLRMAPDYDHLTLMQKVEVFEHAVNNTAG. The segment at 2335 to 2343 is catalytic loop; that stretch reads GLGDRHPSN. Asn2343 contacts Mg(2+). 2 residues coordinate ATP: Met2345 and Ile2356. Residues 2355-2380 form an activation loop region; sequence HIDFGDCFEVAMTREKFPEKIPFRLT. Asp2357 is a Mg(2+) binding site. Position 2446 is a phosphothreonine; by RPS6KB1 (Thr2446). Phosphoserine; by RPS6KB1 is present on Ser2448. Ser2478 carries the post-translational modification Phosphoserine. Ser2481 is modified (phosphoserine; by autocatalysis). An FATC domain is found at 2517-2549; the sequence is DTLDVPTQVELLIKQATSHENLCQCYIGWCPFW.

This sequence belongs to the PI3/PI4-kinase family. In terms of assembly, part of the mechanistic target of rapamycin complex 1 (mTORC1) which contains MTOR, MLST8 and RPTOR. The mTORC1 complex is a 1 Md obligate dimer of two stoichiometric heterotetramers with overall dimensions of 290 A x 210 A x 135 A. It has a rhomboid shape and a central cavity, the dimeric interfaces are formed by interlocking interactions between the two MTOR and the two RPTOR subunits. The MLST8 subunit forms distal foot-like protuberances, and contacts only one MTOR within the complex, while the small AKT1S1/PRAS40 localizes to the midsection of the central core, in close proximity to RPTOR. mTORC1 associates with AKT1S1/PRAS40, which inhibits its activity by blocking MTOR substrate-recruitment site. Component of the mechanistic target of rapamycin complex 2 (mTORC2), consisting in two heterotretramers composed of MTOR, MLST8, RICTOR and MAPKAP1/SIN1. Interacts with PLPP7 and PML. Interacts with PRR5 and RICTOR; the interaction is direct within the mTORC2 complex and interaction with RICTOR is enhanced by deubiquitination of RICTOR by USP9X. mTORC1 and mTORC2 associate with DEPTOR, which regulates their activity. Interacts with WAC; WAC positively regulates MTOR activity by promoting the assembly of the TTT complex composed of TELO2, TTI1 and TTI2 and the RUVBL complex composed of RUVBL1 and RUVBL2 into the TTT-RUVBL complex which leads to the dimerization of the mTORC1 complex and its subsequent activation. Interacts with UBQLN1. Interacts with TTI1 and TELO2. Interacts with CLIP1; phosphorylates and regulates CLIP1. Interacts with NBN. Interacts with HTR6. Interacts with BRAT1. Interacts with MEAK7 (via C-terminal domain); the interaction increases upon nutrient stimulation. Interacts with TM4SF5; the interaction is positively regulated by arginine and is negatively regulated by leucine. Interacts with GPR137B. Interacts with NCKAP1L. Interacts with TPCN1 and TPCN2; the interaction is required for TPCN1 and TPCN2 sensitivity to ATP. Interacts with ATP6V1A and with CRYAB, forming a ternary complex. Interacts with SLC38A7; this interaction mediates the recruitment of mTORC1 to the lysosome and its subsequent activation. Interacts with TSPAN8. Post-translationally, autophosphorylates when part of mTORC1 or mTORC2. Phosphorylation at Ser-1261, Ser-2159 and Thr-2164 promotes autophosphorylation. Phosphorylated at Ser-2448 by RPS6KB1. Phosphorylation in the kinase domain modulates the interactions of MTOR with RPTOR and AKT1S1/PRAS40 and leads to increased intrinsic mTORC1 kinase activity. Phosphorylation at Ser-2159 by TBK1 in response to growth factors and pathogen recognition receptors promotes mTORC1 activity. Phosphorylation at Ser-2159 by TBK1 in response to EGF growth factor promotes mTORC2 activity, leading to AKT1 phosphorylation and activation. Phosphorylation at Thr-2173 in the ATP-binding region by AKT1 strongly reduces kinase activity. Ubiquitinated at Lys-2066 by the SCF(FBXO22) complex via 'Lys-27'-linked ubiquitination prevents mTORC1 substrate recruitment. Expressed in numerous tissues, with highest levels in testis.

It is found in the lysosome membrane. It localises to the endoplasmic reticulum membrane. Its subcellular location is the golgi apparatus membrane. The protein resides in the cell membrane. The protein localises to the mitochondrion outer membrane. It is found in the cytoplasm. It localises to the nucleus. Its subcellular location is the PML body. The protein resides in the microsome membrane. The protein localises to the cytoplasmic vesicle. It is found in the phagosome. It carries out the reaction L-seryl-[protein] + ATP = O-phospho-L-seryl-[protein] + ADP + H(+). The catalysed reaction is L-threonyl-[protein] + ATP = O-phospho-L-threonyl-[protein] + ADP + H(+). The enzyme catalyses L-tyrosyl-[protein] + ATP = O-phospho-L-tyrosyl-[protein] + ADP + H(+). Its activity is regulated as follows. The mTORC1 complex is activated in response to nutrients, growth factors or amino acids: activation requires relocalization of the mTORC1 complex to lysosomes that is mediated by the Ragulator complex, SLC38A9, and the Rag GTPases RagA/RRAGA, RagB/RRAGB, RagC/RRAGC and RagD/RRAGD. Activation of mTORC1 by growth factors such as insulin involves AKT1-mediated phosphorylation of TSC1-TSC2, which leads to the activation of the RHEB GTPase a potent activator of the protein kinase activity of mTORC1. Insulin-stimulated and amino acid-dependent phosphorylation at Ser-1261 promotes autophosphorylation and the activation of mTORC1. On the other hand, low cellular energy levels can inhibit mTORC1 through activation of PRKAA1 while hypoxia inhibits mTORC1 through a REDD1-dependent mechanism which may also require PRKAA1. The kinase activity of MTOR within the mTORC1 complex is positively regulated by MLST8. The kinase activity of MTOR is inhibited by DEPTOR and AKT1S1. The non-canonical mTORC1 complex is independent of the RHEB GTPase and specifically mediates phosphorylation of MiT/TFE factors TFEB and TFE3 but not other mTORC1 substrates: it is activated by FLCN, which activates Rag GTPases RagC/RRAGC and RagD/RRAGD. MTOR is the target of the immunosuppressive and anti-cancer drug rapamycin which acts in complex with FKBP1A/FKBP12, and specifically inhibits its kinase activity. mTORC2 is also activated by growth factors, but seems to be nutrient-insensitive. mTORC2 associates and is directly activated by ribosomes. mTORC2 may also be regulated by RHEB but in an indirect manner through the PI3K signaling pathway. Its function is as follows. Serine/threonine protein kinase which is a central regulator of cellular metabolism, growth and survival in response to hormones, growth factors, nutrients, energy and stress signals. MTOR directly or indirectly regulates the phosphorylation of at least 800 proteins. Functions as part of 2 structurally and functionally distinct signaling complexes mTORC1 and mTORC2 (mTOR complex 1 and 2). In response to nutrients, growth factors or amino acids, mTORC1 is recruited to the lysosome membrane and promotes protein, lipid and nucleotide synthesis by phosphorylating key regulators of mRNA translation and ribosome synthesis. This includes phosphorylation of EIF4EBP1 and release of its inhibition toward the elongation initiation factor 4E (eiF4E). Moreover, phosphorylates and activates RPS6KB1 and RPS6KB2 that promote protein synthesis by modulating the activity of their downstream targets including ribosomal protein S6, eukaryotic translation initiation factor EIF4B, and the inhibitor of translation initiation PDCD4. Stimulates the pyrimidine biosynthesis pathway, both by acute regulation through RPS6KB1-mediated phosphorylation of the biosynthetic enzyme CAD, and delayed regulation, through transcriptional enhancement of the pentose phosphate pathway which produces 5-phosphoribosyl-1-pyrophosphate (PRPP), an allosteric activator of CAD at a later step in synthesis, this function is dependent on the mTORC1 complex. Regulates ribosome synthesis by activating RNA polymerase III-dependent transcription through phosphorylation and inhibition of MAF1 an RNA polymerase III-repressor. Activates dormant ribosomes by mediating phosphorylation of SERBP1, leading to SERBP1 inactivation and reactivation of translation. In parallel to protein synthesis, also regulates lipid synthesis through SREBF1/SREBP1 and LPIN1. To maintain energy homeostasis mTORC1 may also regulate mitochondrial biogenesis through regulation of PPARGC1A. In the same time, mTORC1 inhibits catabolic pathways: negatively regulates autophagy through phosphorylation of ULK1. Under nutrient sufficiency, phosphorylates ULK1 at 'Ser-758', disrupting the interaction with AMPK and preventing activation of ULK1. Also prevents autophagy through phosphorylation of the autophagy inhibitor DAP. Also prevents autophagy by phosphorylating RUBCNL/Pacer under nutrient-rich conditions. Prevents autophagy by mediating phosphorylation of AMBRA1, thereby inhibiting AMBRA1 ability to mediate ubiquitination of ULK1 and interaction between AMBRA1 and PPP2CA. mTORC1 exerts a feedback control on upstream growth factor signaling that includes phosphorylation and activation of GRB10 a INSR-dependent signaling suppressor. Among other potential targets mTORC1 may phosphorylate CLIP1 and regulate microtubules. The mTORC1 complex is inhibited in response to starvation and amino acid depletion. The non-canonical mTORC1 complex, which acts independently of RHEB, specifically mediates phosphorylation of MiT/TFE factors MITF, TFEB and TFE3 in the presence of nutrients, promoting their cytosolic retention and inactivation. Upon starvation or lysosomal stress, inhibition of mTORC1 induces dephosphorylation and nuclear translocation of TFEB and TFE3, promoting their transcription factor activity. The mTORC1 complex regulates pyroptosis in macrophages by promoting GSDMD oligomerization. MTOR phosphorylates RPTOR which in turn inhibits mTORC1. As part of the mTORC2 complex, MTOR transduces signals from growth factors to pathways involved in proliferation, cytoskeletal organization, lipogenesis and anabolic output. In response to growth factors, mTORC2 phosphorylates and activates AGC protein kinase family members, including AKT (AKT1, AKT2 and AKT3), PKC (PRKCA, PRKCB and PRKCE) and SGK1. In contrast to mTORC1, mTORC2 is nutrient-insensitive. mTORC2 plays a critical role in AKT1 activation by mediating phosphorylation of different sites depending on the context, such as 'Thr-450', 'Ser-473', 'Ser-477' or 'Thr-479', facilitating the phosphorylation of the activation loop of AKT1 on 'Thr-308' by PDPK1/PDK1 which is a prerequisite for full activation. mTORC2 also regulates the phosphorylation of SGK1 at 'Ser-422'. mTORC2 may regulate the actin cytoskeleton, through phosphorylation of PRKCA, PXN and activation of the Rho-type guanine nucleotide exchange factors RHOA and RAC1A or RAC1B. The mTORC2 complex also phosphorylates various proteins involved in insulin signaling, such as FBXW8 and IGF2BP1. May also regulate insulin signaling by acting as a tyrosine protein kinase that catalyzes phosphorylation of IGF1R and INSR; additional evidence are however required to confirm this result in vivo. Regulates osteoclastogenesis by adjusting the expression of CEBPB isoforms. Plays an important regulatory role in the circadian clock function; regulates period length and rhythm amplitude of the suprachiasmatic nucleus (SCN) and liver clocks. This chain is Serine/threonine-protein kinase mTOR, found in Homo sapiens (Human).